A 71-amino-acid chain; its full sequence is Bowman-Birk type trypsin inhibitor (71 aa).

Disulfide bonds link Cys10-Cys67, Cys11-Cys27, Cys14-Cys63, Cys17-Cys25, Cys35-Cys42, and Cys39-Cys55.

It belongs to the Bowman-Birk serine protease inhibitor family.

Inhibits trypsin but not chymotrypsin. This is Bowman-Birk type trypsin inhibitor from Triticum aestivum (Wheat).